The primary structure comprises 302 residues: Sulfate adenylyltransferase subunit 2 (302 aa).

Belongs to the PAPS reductase family. CysD subfamily. Heterodimer composed of CysD, the smaller subunit, and CysN.

It carries out the reaction sulfate + ATP + H(+) = adenosine 5'-phosphosulfate + diphosphate. It functions in the pathway sulfur metabolism; hydrogen sulfide biosynthesis; sulfite from sulfate: step 1/3. Functionally, with CysN forms the ATP sulfurylase (ATPS) that catalyzes the adenylation of sulfate producing adenosine 5'-phosphosulfate (APS) and diphosphate, the first enzymatic step in sulfur assimilation pathway. APS synthesis involves the formation of a high-energy phosphoric-sulfuric acid anhydride bond driven by GTP hydrolysis by CysN coupled to ATP hydrolysis by CysD. This Photorhabdus laumondii subsp. laumondii (strain DSM 15139 / CIP 105565 / TT01) (Photorhabdus luminescens subsp. laumondii) protein is Sulfate adenylyltransferase subunit 2.